Reading from the N-terminus, the 333-residue chain is Holliday junction branch migration complex subunit RuvB (333 aa).

Residues 1–182 are large ATPase domain (RuvB-L); sequence MEERIVSAEA…FGVMARLEYY (182 aa). ATP contacts are provided by residues leucine 21, arginine 22, glycine 63, lysine 66, threonine 67, threonine 68, 129–131, arginine 172, tyrosine 182, and arginine 219; that span reads EDF. Mg(2+) is bound at residue threonine 67. Residues 183 to 253 are small ATPAse domain (RuvB-S); the sequence is KPEELAQIVE…RACSALEQLH (71 aa). Residues 256–333 are head domain (RuvB-H); sequence PLGLDHIDDK…AHYGVEKQNG (78 aa). The DNA site is built by arginine 311 and arginine 316.

It belongs to the RuvB family. In terms of assembly, homohexamer. Forms an RuvA(8)-RuvB(12)-Holliday junction (HJ) complex. HJ DNA is sandwiched between 2 RuvA tetramers; dsDNA enters through RuvA and exits via RuvB. An RuvB hexamer assembles on each DNA strand where it exits the tetramer. Each RuvB hexamer is contacted by two RuvA subunits (via domain III) on 2 adjacent RuvB subunits; this complex drives branch migration. In the full resolvosome a probable DNA-RuvA(4)-RuvB(12)-RuvC(2) complex forms which resolves the HJ.

Its subcellular location is the cytoplasm. The catalysed reaction is ATP + H2O = ADP + phosphate + H(+). In terms of biological role, the RuvA-RuvB-RuvC complex processes Holliday junction (HJ) DNA during genetic recombination and DNA repair, while the RuvA-RuvB complex plays an important role in the rescue of blocked DNA replication forks via replication fork reversal (RFR). RuvA specifically binds to HJ cruciform DNA, conferring on it an open structure. The RuvB hexamer acts as an ATP-dependent pump, pulling dsDNA into and through the RuvAB complex. RuvB forms 2 homohexamers on either side of HJ DNA bound by 1 or 2 RuvA tetramers; 4 subunits per hexamer contact DNA at a time. Coordinated motions by a converter formed by DNA-disengaged RuvB subunits stimulates ATP hydrolysis and nucleotide exchange. Immobilization of the converter enables RuvB to convert the ATP-contained energy into a lever motion, pulling 2 nucleotides of DNA out of the RuvA tetramer per ATP hydrolyzed, thus driving DNA branch migration. The RuvB motors rotate together with the DNA substrate, which together with the progressing nucleotide cycle form the mechanistic basis for DNA recombination by continuous HJ branch migration. Branch migration allows RuvC to scan DNA until it finds its consensus sequence, where it cleaves and resolves cruciform DNA. In Shouchella clausii (strain KSM-K16) (Alkalihalobacillus clausii), this protein is Holliday junction branch migration complex subunit RuvB.